Here is a 107-residue protein sequence, read N- to C-terminus: Small ribosomal subunit protein uS17 (107 aa).

The protein belongs to the universal ribosomal protein uS17 family. As to quaternary structure, part of the 30S ribosomal subunit.

Functionally, one of the primary rRNA binding proteins, it binds specifically to the 5'-end of 16S ribosomal RNA. The sequence is that of Small ribosomal subunit protein uS17 from Thermotoga sp. (strain RQ2).